Reading from the N-terminus, the 90-residue chain is RNA-binding protein Hfq (90 aa).

The Sm domain maps to 9-69 (DRFLNHLRVN…ISTIIPSSYV (61 aa)).

The protein belongs to the Hfq family. As to quaternary structure, homohexamer.

Functionally, RNA chaperone that binds small regulatory RNA (sRNAs) and mRNAs to facilitate mRNA translational regulation in response to envelope stress, environmental stress and changes in metabolite concentrations. Also binds with high specificity to tRNAs. The polypeptide is RNA-binding protein Hfq (Thermotoga petrophila (strain ATCC BAA-488 / DSM 13995 / JCM 10881 / RKU-1)).